A 1297-amino-acid polypeptide reads, in one-letter code: Probable bifunctional E2/E3 enzyme R795 (1297 aa).

An RING-type; atypical zinc finger spans residues Cys74–Asn128. One can recognise a U-box domain in the interval Glu678 to Ile750. In terms of domain architecture, VWFA spans Glu899–Ile1082. Positions Gln1133–Leu1279 constitute a UBC core domain. Catalysis depends on Cys1217, which acts as the Glycyl thioester intermediate.

This sequence in the C-terminal section; belongs to the ubiquitin-conjugating enzyme family.

It catalyses the reaction S-ubiquitinyl-[E2 ubiquitin-conjugating enzyme]-L-cysteine + [acceptor protein]-L-lysine = [E2 ubiquitin-conjugating enzyme]-L-cysteine + N(6)-ubiquitinyl-[acceptor protein]-L-lysine.. The enzyme catalyses S-ubiquitinyl-[E1 ubiquitin-activating enzyme]-L-cysteine + [E2 ubiquitin-conjugating enzyme]-L-cysteine = [E1 ubiquitin-activating enzyme]-L-cysteine + S-ubiquitinyl-[E2 ubiquitin-conjugating enzyme]-L-cysteine.. Its pathway is protein modification; protein ubiquitination. Catalyzes the covalent attachment of ubiquitin to other proteins. Also acts as an E3 ubiquitin-protein ligase. This is Probable bifunctional E2/E3 enzyme R795 from Acanthamoeba polyphaga (Amoeba).